The sequence spans 323 residues: MSFFVNRIWYGNHFLQWILVPFSWLYRIVIRTRRWYLQRFCQQLYPIPIIVVGNVTVGGVGKTPLVIEIAKKIQQKGLKVGIVSRGYKAAIKHFPYEVKLNDSAELVGDEPLMMARKINCPVVIAPKRNEAVRYLLDKHSVEIIISDDGLQHYKMGRSIEIVVIDGMRKLGNGFCLPAGPLREPDSRLKQVDFVIVNQGAAEGTYSMELIPKNIVRLSTQEEVSNDLFTSEVAAVAGIGNPQRFYSTLSQLGIKFNPYSYPDHHQFKPHDLNDIDLPVIMTEKDAVKCYSFSSDKLYYLPVEAKLNDSFWEAFWSHQQLQGYY.

Position 56–63 (56–63 (TVGGVGKT)) interacts with ATP.

Belongs to the LpxK family.

The enzyme catalyses a lipid A disaccharide + ATP = a lipid IVA + ADP + H(+). It participates in glycolipid biosynthesis; lipid IV(A) biosynthesis; lipid IV(A) from (3R)-3-hydroxytetradecanoyl-[acyl-carrier-protein] and UDP-N-acetyl-alpha-D-glucosamine: step 6/6. In terms of biological role, transfers the gamma-phosphate of ATP to the 4'-position of a tetraacyldisaccharide 1-phosphate intermediate (termed DS-1-P) to form tetraacyldisaccharide 1,4'-bis-phosphate (lipid IVA). This is Tetraacyldisaccharide 4'-kinase from Legionella pneumophila (strain Corby).